Consider the following 197-residue polypeptide: U1 small nuclear ribonucleoprotein C (197 aa).

The Matrin-type zinc-finger motif lies at 4-36 (YYCEYCDIYLTHSSPVGRRQHNQGRKHISAKIE). Over residues 128 to 137 (FHNNKRINNI) the composition is skewed to low complexity. A disordered region spans residues 128-178 (FHNNKRINNIPKPYNNYTNKPITNSSYKNDKQDYRNNNESNDNMNSNNFSN). Residues 142 to 154 (NNYTNKPITNSSY) show a composition bias toward polar residues. The segment covering 164 to 178 (NNESNDNMNSNNFSN) has biased composition (low complexity).

This sequence belongs to the U1 small nuclear ribonucleoprotein C family. In terms of assembly, U1 snRNP is composed of the 7 core Sm proteins B/B', D1, D2, D3, E, F and G that assemble in a heptameric protein ring on the Sm site of the small nuclear RNA to form the core snRNP, and at least 3 U1 snRNP-specific proteins U1-70K, U1-A and U1-C. U1-C interacts with U1 snRNA and the 5' splice-site region of the pre-mRNA.

Its subcellular location is the nucleus. Its function is as follows. Component of the spliceosomal U1 snRNP, which is essential for recognition of the pre-mRNA 5' splice-site and the subsequent assembly of the spliceosome. U1-C is directly involved in initial 5' splice-site recognition for both constitutive and regulated alternative splicing. The interaction with the 5' splice-site seems to precede base-pairing between the pre-mRNA and the U1 snRNA. Stimulates commitment or early (E) complex formation by stabilizing the base pairing of the 5' end of the U1 snRNA and the 5' splice-site region. This is U1 small nuclear ribonucleoprotein C (SNRPC) from Plasmodium berghei (strain Anka).